A 428-amino-acid chain; its full sequence is Cholecystokinin receptor type A (428 aa).

The Extracellular portion of the chain corresponds to 1-41 (MEVADSLLGNGSDVPPPCELGLENETLVCLEQPRAAKEWQP). Residues N10 and N24 are each glycosylated (N-linked (GlcNAc...) asparagine). An intrachain disulfide couples C18 to C29. Residues 42 to 67 (AVQILLYSLIFLLSVLGNTLVITVLI) traverse the membrane as a helical segment. At 68 to 77 (RNKRMRTVTN) the chain is on the cytoplasmic side. A helical transmembrane segment spans residues 78–104 (IFLLSLAVSDLMLCLFCMPFNLIPNLL). Residues 105–115 (KDFIFGSAVCK) are Extracellular-facing. Cysteines 114 and 196 form a disulfide. The helical transmembrane segment at 116–137 (TTTYFMGTSVSVSTFNLVAISL) threads the bilayer. Residues 138–157 (ERYGAICKPLQSRVWQTKSH) lie on the Cytoplasmic side of the membrane. A helical transmembrane segment spans residues 158-178 (ALKVIATTWCLSFTIMTPYPI). At 179–210 (YSNLVPFTKTNNQTANMCRFLLPNDVMQQSWH) the chain is on the extracellular side. An N-linked (GlcNAc...) asparagine glycan is attached at N190. A helical transmembrane segment spans residues 211–234 (TFLLLILFLIPGIVMMVAYGLISL). The Cytoplasmic portion of the chain corresponds to 235 to 313 (ELYQGIKFDA…NLMAKKRVIR (79 aa)). Residues 250–269 (ARDRNPSTGSSGRYEDGDGC) form a disordered region. A helical transmembrane segment spans residues 314 to 334 (MLMVIVVLFFLCWMPIFSANA). The Extracellular segment spans residues 335 to 349 (WRAYDTASAERRLSG). The helical transmembrane segment at 350 to 373 (TPISFILLLSYTSSCVNPIIYCFM) threads the bilayer. The Cytoplasmic portion of the chain corresponds to 374 to 428 (NKRFRLGFLATFPCCPHPGPPGPRGEVGEEEEGRTTGASLSRYSYSHMSASAPGP). Residue C387 is the site of S-palmitoyl cysteine attachment. The segment at 393–428 (PPGPRGEVGEEEEGRTTGASLSRYSYSHMSASAPGP) is disordered. A compositionally biased stretch (polar residues) spans 409 to 422 (TGASLSRYSYSHMS).

The protein belongs to the G-protein coupled receptor 1 family.

It is found in the cell membrane. Receptor for cholecystokinin. Mediates pancreatic growth and enzyme secretion, smooth muscle contraction of the gall bladder and stomach. Has a 1000-fold higher affinity for CCK rather than for gastrin. It modulates feeding and dopamine-induced behavior in the central and peripheral nervous system. This receptor mediates its action by association with G proteins that activate a phosphatidylinositol-calcium second messenger system. The protein is Cholecystokinin receptor type A (CCKAR) of Canis lupus familiaris (Dog).